We begin with the raw amino-acid sequence, 670 residues long: DNA ligase (670 aa).

NAD(+)-binding positions include 36–40 (DEEYD), 84–85 (SL), and Glu-116. Catalysis depends on Lys-118, which acts as the N6-AMP-lysine intermediate. NAD(+) contacts are provided by Arg-139, Glu-177, Lys-293, and Lys-317. Residues Cys-411, Cys-414, Cys-429, and Cys-434 each contribute to the Zn(2+) site. One can recognise a BRCT domain in the interval 594–670 (KKPSPLKGLT…SYEEFLKMLE (77 aa)).

It belongs to the NAD-dependent DNA ligase family. LigA subfamily. The cofactor is Mg(2+). Mn(2+) is required as a cofactor.

The catalysed reaction is NAD(+) + (deoxyribonucleotide)n-3'-hydroxyl + 5'-phospho-(deoxyribonucleotide)m = (deoxyribonucleotide)n+m + AMP + beta-nicotinamide D-nucleotide.. Functionally, DNA ligase that catalyzes the formation of phosphodiester linkages between 5'-phosphoryl and 3'-hydroxyl groups in double-stranded DNA using NAD as a coenzyme and as the energy source for the reaction. It is essential for DNA replication and repair of damaged DNA. This is DNA ligase from Thermodesulfovibrio yellowstonii (strain ATCC 51303 / DSM 11347 / YP87).